Reading from the N-terminus, the 380-residue chain is Adaptive-response sensory kinase SasA (380 aa).

The segment at 20–101 is kaiB-like domain, interacts with KaiC; the sequence is LLFVANRPGD…QKVDYWWPRW (82 aa). Positions 157–380 constitute a Histidine kinase domain; it reads LLAHELRNPL…CFHFTLPVYS (224 aa). Position 160 is a phosphohistidine; by autocatalysis (histidine 160).

As to quaternary structure, homotrimer with a small amount of possible homohexamer; a protein fragment of 109-380 is also a homotrimer. Interacts with KaiC, probably as 1 SasA trimer:1 KaiC homohexamer; unphosphorylated SasA has the highest affinity. Homodimer. Binds to the B-loop in the CI domain of KaiC; SasA and KaiB(fs) compete to bind to the CI domain. Binds preferentially to doubly phosphorylated KaiC. Post-translationally, autophosphorylates, probably on His-160.

It carries out the reaction ATP + protein L-histidine = ADP + protein N-phospho-L-histidine.. Its function is as follows. Member of the two-component regulatory system SasA/RpaA involved in genome-wide circadian gene expression. One of several clock output pathways. Participates in the Kai clock protein complex, the main circadian regulator in cyanobacteria, via its interaction with KaiC. KaiC enhances the autophosphorylation activity of SasA, which then transfers its phosphate group to RpaA to activate it. In addition to its output function, recruits fold-shifted KaiB (KaiB(fs)) to KaiC to cooperatively form the KaiB(6):KaiC(6) complex (independent of SasA kinase activity). Required for robustness of the circadian rhythm of gene expression and is involved in clock output, also required for adaptation to light/dark cycles. This is Adaptive-response sensory kinase SasA from Thermosynechococcus vestitus (strain NIES-2133 / IAM M-273 / BP-1).